A 142-amino-acid polypeptide reads, in one-letter code: UPF0102 protein Bamb_0202 (142 aa).

Residues 1–23 are disordered; that stretch reads MCHAAPAAPASGRGLPHGGGNFS.

Belongs to the UPF0102 family.

The protein is UPF0102 protein Bamb_0202 of Burkholderia ambifaria (strain ATCC BAA-244 / DSM 16087 / CCUG 44356 / LMG 19182 / AMMD) (Burkholderia cepacia (strain AMMD)).